We begin with the raw amino-acid sequence, 315 residues long: Ribosomal RNA small subunit methyltransferase H (315 aa).

Residues 35 to 37 (GGH), Asp-55, Phe-79, Asp-101, and Gln-108 contribute to the S-adenosyl-L-methionine site.

It belongs to the methyltransferase superfamily. RsmH family.

It is found in the cytoplasm. The catalysed reaction is cytidine(1402) in 16S rRNA + S-adenosyl-L-methionine = N(4)-methylcytidine(1402) in 16S rRNA + S-adenosyl-L-homocysteine + H(+). Its function is as follows. Specifically methylates the N4 position of cytidine in position 1402 (C1402) of 16S rRNA. This chain is Ribosomal RNA small subunit methyltransferase H, found in Photobacterium profundum (strain SS9).